Consider the following 1216-residue polypeptide: ATP-dependent helicase/nuclease subunit A (1216 aa).

The region spanning 26–488 (QKKTAEQIEA…ILLKENFRSS (463 aa)) is the UvrD-like helicase ATP-binding domain. ATP is bound at residue 47-54 (ASAGSGKT). In terms of domain architecture, UvrD-like helicase C-terminal spans 515 to 802 (KHQLVFANTK…ELMTIHKSKG (288 aa)).

Belongs to the helicase family. AddA subfamily. Heterodimer of AddA and AddB/RexB. It depends on Mg(2+) as a cofactor.

The catalysed reaction is Couples ATP hydrolysis with the unwinding of duplex DNA by translocating in the 3'-5' direction.. It catalyses the reaction ATP + H2O = ADP + phosphate + H(+). In terms of biological role, the heterodimer acts as both an ATP-dependent DNA helicase and an ATP-dependent, dual-direction single-stranded exonuclease. Recognizes the chi site generating a DNA molecule suitable for the initiation of homologous recombination. The AddA nuclease domain is required for chi fragment generation; this subunit has the helicase and 3' -&gt; 5' nuclease activities. The chain is ATP-dependent helicase/nuclease subunit A from Streptococcus pneumoniae (strain CGSP14).